The sequence spans 107 residues: Essential MCU regulator, mitochondrial (107 aa).

Residues 1–47 constitute a mitochondrion transit peptide; sequence MASGAARWLALVRVGSGASRSWLSLRKGGDVSAGRSCSGQSLVPTRS. Over 48–65 the chain is Mitochondrial matrix; it reads VIVTRSGAILPKPVKMSF. Residues 66–85 traverse the membrane as a helical segment; that stretch reads GLLRVFSIVIPFLYVGTLIS. Residues 81–85 carry the GXXXX[G/A/S] motif; that stretch reads GTLIS. Residues 86 to 107 are Mitochondrial intermembrane-facing; it reads KNFAALLEEHDIFVPEDDDDDD.

Belongs to the SMDT1/EMRE family. In terms of assembly, component of the uniplex complex, composed of MCU, EMRE/SMDT1, MICU1 and MICU2 (or MICU3) in a 4:4:1:1 stoichiometry. The number of EMRE/SMDT1 molecules is hovewer variable, ranging from 1 to 4 copies per uniplex complex, leading to uniplex complexes with distinct gatekeeping profiles. Interacts (via its C-terminal poly-Asp tail) with MCUR1; the interaction is direct. Unprocessed form interacts (via transit peptide) with MAIP1. Undergoes proteolytic degradation in neurons: degraded by AFG3L2 and SPG7 before SMDT1/EMRE assembly with the uniporter complex, limiting the availability of SMDT1/EMRE for MCU assembly and promoting efficient assembly of gatekeeper subunits with MCU.

Its subcellular location is the mitochondrion inner membrane. Functionally, essential regulatory subunit of the mitochondrial calcium uniporter complex (uniplex), a complex that mediates calcium uptake into mitochondria. Required to bridge the calcium-sensing proteins MICU1 with the calcium-conducting subunit MCU. Acts by mediating activation of MCU and retention of MICU1 to the MCU pore, in order to ensure tight regulation of the uniplex complex and appropriate responses to intracellular calcium signaling. The protein is Essential MCU regulator, mitochondrial of Bos taurus (Bovine).